Reading from the N-terminus, the 261-residue chain is ATP synthase subunit a (261 aa).

Helical transmembrane passes span 30 to 50 (VLFTNSALWMVVAAITLGLFM), 63 to 83 (WQVAVEGFTGFISSMMMANIG), 96 to 116 (LFMFILFCNLLGMLPLGVLGL), 125 to 145 (IAITGVLALISFAIVLVVGFW), 151 to 171 (FFSLFVPHGTPLPMIPIIAPI), 187 to 207 (LFVAMTAGHVLLKVLSGFVIN), 214 to 234 (LWLGSIVSVLSFTLMIGISAL), and 235 to 255 (ELLVAGIQAYVFALLTSLYIN).

This sequence belongs to the ATPase A chain family. F-type ATPases have 2 components, CF(1) - the catalytic core - and CF(0) - the membrane proton channel. CF(1) has five subunits: alpha(3), beta(3), gamma(1), delta(1), epsilon(1). CF(0) has three main subunits: a(1), b(2) and c(9-12). The alpha and beta chains form an alternating ring which encloses part of the gamma chain. CF(1) is attached to CF(0) by a central stalk formed by the gamma and epsilon chains, while a peripheral stalk is formed by the delta and b chains.

The protein localises to the cell inner membrane. Its function is as follows. Key component of the proton channel; it plays a direct role in the translocation of protons across the membrane. The polypeptide is ATP synthase subunit a (Sphingopyxis alaskensis (strain DSM 13593 / LMG 18877 / RB2256) (Sphingomonas alaskensis)).